Reading from the N-terminus, the 39-residue chain is Natriuretic peptide TcNPa (39 aa).

The propeptide occupies 1-8; sequence SGSETAKI. The cysteines at positions 12 and 28 are disulfide-linked. Threonine 35 carries an O-linked (GalNAc...) threonine glycan.

Belongs to the natriuretic peptide family. Post-translationally, O-linked glycans consist of galactosyl-beta(1-3)-N-acetylgalactosamine (Gal-GalNAc). In terms of processing, the synthetic non-glycosylated form shows higher potency on natriuretic receptors (EC(50)=672.90 nM) and NPR2 (EC(50)=261.0 nM). As to expression, expressed by the venom gland.

Its subcellular location is the secreted. Functionally, snake venom natriuretic peptide that targets both NPR1 (EC(50)=1080.0 nM) and NPR2 (EC(50)=328.60 nM). Exhibits hypotensive and vasodepressor activities. The protein is Natriuretic peptide TcNPa of Tropidechis carinatus (Australian rough-scaled snake).